Here is a 479-residue protein sequence, read N- to C-terminus: Phosphatidylinositol 4-kinase type 2-alpha (479 aa).

An N-acetylmethionine modification is found at Met-1. The tract at residues 1–74 is disordered; it reads MDETSPLVSP…ARGAAAQGQT (74 aa). 5 positions are modified to phosphoserine: Ser-5, Ser-9, Ser-44, Ser-47, and Ser-51. Residues 31–45 show a composition bias toward low complexity; it reads VPGGAVRVAAAAGSG. Positions 53-66 are enriched in basic and acidic residues; it reads GHDRERQPLLDRAR. The region spanning 124–453 is the PI3K/PI4K catalytic domain; it reads CIFPERIYQG…VQMPPVIVET (330 aa). Positions 130 to 136 are G-loop; that stretch reads IYQGSSG. Residues 131-137 and Lys-152 contribute to the ATP site; that span reads YQGSSGS. The tract at residues 157 to 159 is important for substrate binding; that stretch reads EPY. Residues 165–178 are important for interaction with membranes; the sequence is KWTKWLQKLCCPCC. Residues Cys-174, Cys-175, Cys-177, and Cys-178 are each lipidated (S-palmitoyl cysteine). 261–264 is a binding site for ATP; the sequence is QLFV. Residues 268–276 are important for interaction with membranes; that stretch reads KDADYWLRR. The interval 305 to 313 is catalytic loop; the sequence is RNTDRGNDN. Positions 344 to 364 are activation loop; sequence AIDNGLAFPLKHPDSWRAYPF. An ATP-binding site is contributed by Asp-346. Positions 359–368 are important for interaction with membranes; sequence WRAYPFYWAW. A Phosphoserine modification is found at Ser-462.

It belongs to the PI3/PI4-kinase family. Type II PI4K subfamily. As to quaternary structure, associates with the BLOC-1 and the AP-3 complexes; the BLOC-1 complex is required for optimal binding of PI4K2A to the AP-3 complex. Interacts with BLOC1S5 and DTNBP1. Interacts with FOS; this interaction may enhance phosphatidylinositol phosphorylation activity. Interacts with ITCH. Interacts with ATG9A. Palmitoylated by ZDHHC3 and ZDHHC7 in the CCPCC motif. Palmitoylation is cholesterol-dependent, and required for TGN localization. Post-translationally, ubiquitinated by ITCH; this does not lead to proteasomal degradation. As to expression, widely expressed. Highest expression is observed in kidney, brain, heart, skeletal muscle, and placenta and lowest expression is observed in colon, thymus, and small intestine.

The protein localises to the golgi apparatus. Its subcellular location is the trans-Golgi network membrane. The protein resides in the membrane raft. It localises to the cell projection. It is found in the dendrite. The protein localises to the presynaptic cell membrane. Its subcellular location is the synapse. The protein resides in the synaptosome. It localises to the mitochondrion. It is found in the endosome. The protein localises to the endosome membrane. Its subcellular location is the cytoplasmic vesicle. The protein resides in the membrane. It localises to the cell membrane. It is found in the perikaryon. The protein localises to the neuron projection. It carries out the reaction a 1,2-diacyl-sn-glycero-3-phospho-(1D-myo-inositol) + ATP = a 1,2-diacyl-sn-glycero-3-phospho-(1D-myo-inositol 4-phosphate) + ADP + H(+). Functionally, membrane-bound phosphatidylinositol-4 kinase (PI4-kinase) that catalyzes the phosphorylation of phosphatidylinositol (PI) to phosphatidylinositol 4-phosphate (PI4P), a lipid that plays important roles in endocytosis, Golgi function, protein sorting and membrane trafficking and is required for prolonged survival of neurons. Besides, phosphorylation of phosphatidylinositol (PI) to phosphatidylinositol 4-phosphate (PI4P) is the first committed step in the generation of phosphatidylinositol 4,5-bisphosphate (PIP2), a precursor of the second messenger inositol 1,4,5-trisphosphate (InsP3). This chain is Phosphatidylinositol 4-kinase type 2-alpha (PI4K2A), found in Homo sapiens (Human).